We begin with the raw amino-acid sequence, 1066 residues long: Probable sucrose-phosphate synthase 4 (1066 aa).

2 disordered regions span residues 132 to 166 and 688 to 714; these read YAAADMSEDLSEGEKGENINESSSTHDESTRGRMP and PRHPRWQKSDDATEVSEADSPGDSLRD. The segment covering 143–162 has biased composition (basic and acidic residues); that stretch reads EGEKGENINESSSTHDESTR.

It belongs to the glycosyltransferase 1 family. As to quaternary structure, homodimer or homotetramer. As to expression, expressed in germinating seeds.

It carries out the reaction beta-D-fructose 6-phosphate + UDP-alpha-D-glucose = sucrose 6(F)-phosphate + UDP + H(+). It participates in glycan biosynthesis; sucrose biosynthesis; sucrose from D-fructose 6-phosphate and UDP-alpha-D-glucose: step 1/2. Activity is regulated by phosphorylation and moderated by concentration of metabolites and light. Functionally, plays a role in photosynthetic sucrose synthesis by catalyzing the rate-limiting step of sucrose biosynthesis from UDP-glucose and fructose- 6-phosphate. Involved in the regulation of carbon partitioning in the leaves of plants. May regulate the synthesis of sucrose and therefore play a major role as a limiting factor in the export of photoassimilates out of the leaf. Plays a role for sucrose availability that is essential for plant growth and fiber elongation. This is Probable sucrose-phosphate synthase 4 (SPS4) from Oryza sativa subsp. japonica (Rice).